The sequence spans 787 residues: Protein translocase subunit SecA (787 aa).

ATP-binding positions include glutamine 85, 103-107 (GEGKT), and aspartate 492.

The protein belongs to the SecA family. Monomer and homodimer. Part of the essential Sec protein translocation apparatus which comprises SecA, SecYEG and auxiliary proteins SecDF. Other proteins may also be involved.

The protein resides in the cell membrane. It is found in the cytoplasm. It catalyses the reaction ATP + H2O + cellular proteinSide 1 = ADP + phosphate + cellular proteinSide 2.. Functionally, part of the Sec protein translocase complex. Interacts with the SecYEG preprotein conducting channel. Has a central role in coupling the hydrolysis of ATP to the transfer of proteins into and across the cell membrane, serving as an ATP-driven molecular motor driving the stepwise translocation of polypeptide chains across the membrane. The protein is Protein translocase subunit SecA of Lactiplantibacillus plantarum (strain ATCC BAA-793 / NCIMB 8826 / WCFS1) (Lactobacillus plantarum).